An 89-amino-acid chain; its full sequence is UPF0297 protein SEQ_2150 (89 aa).

Belongs to the UPF0297 family.

The sequence is that of UPF0297 protein SEQ_2150 from Streptococcus equi subsp. equi (strain 4047).